Reading from the N-terminus, the 834-residue chain is Arf-GAP with coiled-coil, ANK repeat and PH domain-containing protein 3 (834 aa).

One can recognise a PH domain in the interval 268-363 (GVVMEGYLFK…WVQAVQASIA (96 aa)). The disordered stretch occupies residues 375-400 (SERLDRTASPSTSSIDSATDTRERGV). Polar residues predominate over residues 382–392 (ASPSTSSIDSA). The region spanning 403–525 (ESVLQRVQSV…KFLRKAPMAP (123 aa)) is the Arf-GAP domain. Residues 418–441 (CGDCGQPDPRWASINLGVLLCIEC) form a C4-type zinc finger. The tract at residues 633–653 (SVTEEEGAESEESSGEADGDT) is disordered. Over residues 634–653 (VTEEEGAESEESSGEADGDT) the composition is skewed to acidic residues. ANK repeat units lie at residues 702-731 (EGKT…DVNQ), 735-764 (RGRA…DQHA), and 768-797 (EQRD…AEEM).

Functionally, GTPase-activating protein for the ADP ribosylation factor family. This is Arf-GAP with coiled-coil, ANK repeat and PH domain-containing protein 3 (ACAP3) from Homo sapiens (Human).